The primary structure comprises 87 residues: Cytochrome c6 (87 aa).

Heme c-binding residues include Cys-14, Cys-17, His-18, and Met-58.

It belongs to the cytochrome c family. PetJ subfamily. Monomer. Post-translationally, binds 1 heme c group covalently per subunit.

It is found in the cellular thylakoid lumen. Functionally, functions as an electron carrier between membrane-bound cytochrome b6-f and photosystem I in oxygenic photosynthesis. This chain is Cytochrome c6 (petJ), found in Parathermosynechococcus lividus (Thermostichus lividus).